We begin with the raw amino-acid sequence, 692 residues long: Elongation factor G (692 aa).

Residues K8–L282 enclose the tr-type G domain. Residues A17 to T24, D81 to H85, and N135 to D138 contribute to the GTP site.

It belongs to the TRAFAC class translation factor GTPase superfamily. Classic translation factor GTPase family. EF-G/EF-2 subfamily.

Its subcellular location is the cytoplasm. In terms of biological role, catalyzes the GTP-dependent ribosomal translocation step during translation elongation. During this step, the ribosome changes from the pre-translocational (PRE) to the post-translocational (POST) state as the newly formed A-site-bound peptidyl-tRNA and P-site-bound deacylated tRNA move to the P and E sites, respectively. Catalyzes the coordinated movement of the two tRNA molecules, the mRNA and conformational changes in the ribosome. The chain is Elongation factor G from Shouchella clausii (strain KSM-K16) (Alkalihalobacillus clausii).